The primary structure comprises 320 residues: tRNA U34 carboxymethyltransferase (320 aa).

Residues Lys87, Trp101, Lys106, Gly126, 148 to 150 (EPS), 176 to 177 (VE), Met192, Tyr196, and Arg311 each bind carboxy-S-adenosyl-L-methionine.

The protein belongs to the class I-like SAM-binding methyltransferase superfamily. CmoB family. As to quaternary structure, homotetramer.

The enzyme catalyses carboxy-S-adenosyl-L-methionine + 5-hydroxyuridine(34) in tRNA = 5-carboxymethoxyuridine(34) in tRNA + S-adenosyl-L-homocysteine + H(+). Its function is as follows. Catalyzes carboxymethyl transfer from carboxy-S-adenosyl-L-methionine (Cx-SAM) to 5-hydroxyuridine (ho5U) to form 5-carboxymethoxyuridine (cmo5U) at position 34 in tRNAs. The protein is tRNA U34 carboxymethyltransferase of Desulfotalea psychrophila (strain LSv54 / DSM 12343).